Reading from the N-terminus, the 152-residue chain is UPF0266 membrane protein KPN78578_23010 (152 aa).

3 consecutive transmembrane segments (helical) span residues 6 to 26, 45 to 65, and 67 to 87; these read LVIILFILALLAYAIYDQFIM, VDGMIFVGLTAILIYNNITQH, and TAITTWLLSVLALMGLYLFWI.

Belongs to the UPF0266 family.

It localises to the cell inner membrane. The protein is UPF0266 membrane protein KPN78578_23010 of Klebsiella pneumoniae subsp. pneumoniae (strain ATCC 700721 / MGH 78578).